Reading from the N-terminus, the 336-residue chain is Tryptophan--tRNA ligase (336 aa).

ATP is bound by residues 11–13 (TTT) and 19–20 (GN). A 'HIGH' region motif is present at residues 12–20 (TTGIPHLGN). An L-tryptophan-binding site is contributed by D145. Residues 157-159 (GRD), L196, and 203-207 (KMSKS) each bind ATP. The 'KMSKS' region motif lies at 203–207 (KMSKS).

Belongs to the class-I aminoacyl-tRNA synthetase family. In terms of assembly, homodimer.

The protein localises to the cytoplasm. The enzyme catalyses tRNA(Trp) + L-tryptophan + ATP = L-tryptophyl-tRNA(Trp) + AMP + diphosphate + H(+). Its function is as follows. Catalyzes the attachment of tryptophan to tRNA(Trp). The chain is Tryptophan--tRNA ligase from Neisseria meningitidis serogroup A / serotype 4A (strain DSM 15465 / Z2491).